Consider the following 311-residue polypeptide: Tricarboxylate transport protein, mitochondrial (311 aa).

A propeptide spans 1–13 (removed in mature form); that stretch reads MAAARAPRALTSA. Low complexity predominate over residues 1–15; that stretch reads MAAARAPRALTSASP. The interval 1 to 22 is disordered; the sequence is MAAARAPRALTSASPGSGKAKL. 3 Solcar repeats span residues 23-111, 122-208, and 218-303; these read THPG…LSNH, TRGL…LRNW, and MNPL…VVKL. The next 3 membrane-spanning stretches (helical) occupy residues 29–46, 86–105, and 129–143; these read ILAG…TFPT, GLSS…FGTF, and LGAG…VCPM. Serine 156 bears the Phosphoserine mark. 3 helical membrane-spanning segments follow: residues 183-202, 224-241, and 278-297; these read GLTA…FFVM, GVFG…NTPL, and GTVP…FIIY.

Belongs to the mitochondrial carrier (TC 2.A.29) family. Post-translationally, possesses a short cleavable presequence, which, however, is found to be dispensable both for targeting to mitochondria and insertion into the inner membrane. However, the presequence is required to keep SLC25A1 in a soluble state and thus in an import-competent state. Mature SLC25A1 lacking the presequence is prone to aggregation.

The protein localises to the mitochondrion inner membrane. The protein resides in the mitochondrion membrane. It catalyses the reaction (S)-malate(in) + citrate(out) = (S)-malate(out) + citrate(in). The catalysed reaction is D-threo-isocitrate(in) + citrate(out) = D-threo-isocitrate(out) + citrate(in). It carries out the reaction citrate(out) + succinate(in) = citrate(in) + succinate(out). The enzyme catalyses phosphoenolpyruvate(in) + citrate(out) = phosphoenolpyruvate(out) + citrate(in). It catalyses the reaction cis-aconitate(in) + citrate(out) = cis-aconitate(out) + citrate(in). The catalysed reaction is trans-aconitate(in) + citrate(out) = trans-aconitate(out) + citrate(in). It carries out the reaction maleate(in) + citrate(out) = maleate(out) + citrate(in). In terms of biological role, mitochondrial electroneutral antiporter that exports citrate from the mitochondria into the cytosol in exchange for malate. Also able to mediate the exchange of citrate for isocitrate, phosphoenolpyruvate, cis-aconitate and to a lesser extent trans-aconitate, maleate and succinate. In the cytoplasm, citrate plays important roles in fatty acid and sterol synthesis, regulation of glycolysis, protein acetylation, and other physiopathological processes. This Bos taurus (Bovine) protein is Tricarboxylate transport protein, mitochondrial (SLC25A1).